We begin with the raw amino-acid sequence, 117 residues long: Large ribosomal subunit protein bL20 (117 aa).

The protein belongs to the bacterial ribosomal protein bL20 family.

Binds directly to 23S ribosomal RNA and is necessary for the in vitro assembly process of the 50S ribosomal subunit. It is not involved in the protein synthesizing functions of that subunit. The chain is Large ribosomal subunit protein bL20 from Rickettsia bellii (strain OSU 85-389).